The primary structure comprises 538 residues: MAWQGTGPSVRGMPGGVRLRLGLLLLQLLLLQRPALGFGDEEERRCDPIRIAMCQNLGYNVTKMPNLVGHELQTDAELQLTTFTPLIQYGCSSQLQFFLCSVYVPMCTEKINIPIGPCGGMCLSVKRRCEPVLKEFGFAWPDSLNCSKFPPQNDHNHMCMEGPGDEEVPLPHKTPIQPGEECHSVGTNSDQYIWVKRSLNCVLKCGYDAGLYSRSAKEFTDIWMAVWASLCFISTTFTVLTFLIDSSRFSYPERPIIFLSMCYNIYSIAYIVRLTVGRERISCDFEEAAEPVLIQEGLKNTGCAIIFLLMYFFGMASSIWWVILTLTWFLAAGLKWGHEAIEMHSSYFHIAAWAIPAVKTIVILIMRLVDADELTGLCYVGNQSLDALTGFVVAPLFTYLVIGTLFIAAGLVALFKIRSNLQKDGTKTDKLERLMVKIGVFSVLYTVPATCVIACYFYEISNWALFRYSADDSNMAVEMLKIFMSLLVGITSGMWIWSAKTLHTWQKCSNRLVNSGKVKREKRGNGWVKPGKGNETVV.

Residues 1–37 (MAWQGTGPSVRGMPGGVRLRLGLLLLQLLLLQRPALG) form the signal peptide. Over 38-213 (FGDEEERRCD…KCGYDAGLYS (176 aa)) the chain is Extracellular. The FZ domain maps to 41–162 (EEERRCDPIR…NDHNHMCMEG (122 aa)). 8 disulfides stabilise this stretch: cysteine 46-cysteine 107, cysteine 54-cysteine 100, cysteine 91-cysteine 129, cysteine 118-cysteine 159, cysteine 122-cysteine 146, cysteine 182-cysteine 201, cysteine 205-cysteine 283, and cysteine 303-cysteine 378. An N-linked (GlcNAc...) asparagine glycan is attached at asparagine 60. The N-linked (GlcNAc...) asparagine glycan is linked to asparagine 145. Residues 214–244 (RSAKEFTDIWMAVWASLCFISTTFTVLTFLI) traverse the membrane as a helical segment. The Cytoplasmic segment spans residues 245–250 (DSSRFS). A helical transmembrane segment spans residues 251–276 (YPERPIIFLSMCYNIYSIAYIVRLTV). Over 277–300 (GRERISCDFEEAAEPVLIQEGLKN) the chain is Extracellular. The helical transmembrane segment at 301–334 (TGCAIIFLLMYFFGMASSIWWVILTLTWFLAAGL) threads the bilayer. Residues 335 to 337 (KWG) are Cytoplasmic-facing. A helical membrane pass occupies residues 338-366 (HEAIEMHSSYFHIAAWAIPAVKTIVILIM). The Extracellular portion of the chain corresponds to 367–384 (RLVDADELTGLCYVGNQS). N-linked (GlcNAc...) asparagine glycosylation occurs at asparagine 382. A helical membrane pass occupies residues 385–419 (LDALTGFVVAPLFTYLVIGTLFIAAGLVALFKIRS). Over 420–432 (NLQKDGTKTDKLE) the chain is Cytoplasmic. A helical membrane pass occupies residues 433-461 (RLMVKIGVFSVLYTVPATCVIACYFYEIS). At 462–474 (NWALFRYSADDSN) the chain is on the extracellular side. The helical transmembrane segment at 475–496 (MAVEMLKIFMSLLVGITSGMWI) threads the bilayer. At 497-538 (WSAKTLHTWQKCSNRLVNSGKVKREKRGNGWVKPGKGNETVV) the chain is on the cytoplasmic side. A Lys-Thr-X-X-X-Trp motif, mediates interaction with the PDZ domain of Dvl family members motif is present at residues 500 to 505 (KTLHTW). The short motif at 536-538 (TVV) is the PDZ-binding element.

The protein belongs to the G-protein coupled receptor Fz/Smo family. As to quaternary structure, interacts with MAGI3 and NDP. Component of a complex, at least composed of TSPAN12, FZD4 and norrin (NDP). Interacts (via FZ domain) with TSKU; TSKU competes with WNT2B for binding to FZD4, inhibiting Wnt signaling and repressing peripheral eye development. Interacts with glypican GPC3. Ubiquitinated by ZNRF3, leading to its degradation by the proteasome.

The protein localises to the cell membrane. Functionally, receptor for Wnt proteins. Most of frizzled receptors are coupled to the beta-catenin (CTNNB1) canonical signaling pathway, which leads to the activation of disheveled proteins, inhibition of GSK-3 kinase, nuclear accumulation of beta-catenin (CTNNB1) and activation of Wnt target genes. Plays a critical role in retinal vascularization by acting as a receptor for Wnt proteins and norrin (NDP). In retina, it can be both activated by Wnt protein-binding, but also by a Wnt-independent signaling via binding of norrin (NDP), promoting in both cases beta-catenin (CTNNB1) accumulation and stimulation of LEF/TCF-mediated transcriptional programs. A second signaling pathway involving PKC and calcium fluxes has been seen for some family members, but it is not yet clear if it represents a distinct pathway or if it can be integrated in the canonical pathway, as PKC seems to be required for Wnt-mediated inactivation of GSK-3 kinase. Both pathways seem to involve interactions with G-proteins. May be involved in transduction and intercellular transmission of polarity information during tissue morphogenesis and/or in differentiated tissues. This is Frizzled-4 (Fzd4) from Rattus norvegicus (Rat).